Here is a 100-residue protein sequence, read N- to C-terminus: Urease subunit gamma (100 aa).

It belongs to the urease gamma subunit family. Heterotrimer of UreA (gamma), UreB (beta) and UreC (alpha) subunits. Three heterotrimers associate to form the active enzyme.

It localises to the cytoplasm. The enzyme catalyses urea + 2 H2O + H(+) = hydrogencarbonate + 2 NH4(+). The protein operates within nitrogen metabolism; urea degradation; CO(2) and NH(3) from urea (urease route): step 1/1. In Halalkalibacterium halodurans (strain ATCC BAA-125 / DSM 18197 / FERM 7344 / JCM 9153 / C-125) (Bacillus halodurans), this protein is Urease subunit gamma.